The following is a 224-amino-acid chain: Transcriptional regulatory protein CiaR (224 aa).

One can recognise a Response regulatory domain in the interval 3-116 (KILLVEDDLG…ELKMRIQALL (114 aa)). Residue Asp51 is modified to 4-aspartylphosphate. Residues 124 to 222 (ENTLTYGNIV…LRSVGYLLKD (99 aa)) constitute a DNA-binding region (ompR/PhoB-type).

Post-translationally, phosphorylated by CiaH.

It is found in the cytoplasm. In terms of biological role, member of the two-component regulatory system CiaH/CiaR. Involved in early steps of competence regulation and in penicillin susceptibility. The protein is Transcriptional regulatory protein CiaR (ciaR) of Streptococcus pneumoniae (strain ATCC BAA-255 / R6).